The primary structure comprises 714 residues: DNA gyrase subunit B (714 aa).

A Toprim domain is found at 492-606 (SELYVVEGDS…NGHVFLAQPP (115 aa)). Mg(2+)-binding residues include Glu-498, Asp-571, and Asp-573.

The protein belongs to the type II topoisomerase GyrB family. Heterotetramer, composed of two GyrA and two GyrB chains. In the heterotetramer, GyrA contains the active site tyrosine that forms a transient covalent intermediate with DNA, while GyrB binds cofactors and catalyzes ATP hydrolysis. Mg(2+) is required as a cofactor. The cofactor is Mn(2+). Ca(2+) serves as cofactor.

It is found in the cytoplasm. The catalysed reaction is ATP-dependent breakage, passage and rejoining of double-stranded DNA.. With respect to regulation, DNA supercoiling is inhibited by EDTA, novobiocin, coumermycin and ciprofloxacin. A type II topoisomerase that negatively supercoils closed circular double-stranded DNA in an ATP-dependent manner and also catalyzes the interconversion of other topological isomers of double-stranded DNA rings, including catenanes and knotted rings. Relaxes negatively supercoiled DNA in an ATP-independent manner. A linear reaction intermediate can be trapped in the presence of the antibiotic ciprofloxacin. Negative supercoiling favors strand separation, and DNA replication, transcription, recombination and repair, all of which involve strand separation. Type II topoisomerases break and join 2 DNA strands simultaneously in an ATP-dependent manner. The polypeptide is DNA gyrase subunit B (Mycobacterium bovis (strain BCG / Pasteur 1173P2)).